The primary structure comprises 588 residues: Adenine deaminase (588 aa).

This sequence belongs to the metallo-dependent hydrolases superfamily. Adenine deaminase family. In terms of assembly, homodimer. The cofactor is Mn(2+).

It catalyses the reaction adenine + H2O + H(+) = hypoxanthine + NH4(+). This chain is Adenine deaminase, found in Escherichia coli O157:H7 (strain EC4115 / EHEC).